Reading from the N-terminus, the 408-residue chain is Imidazolonepropionase (408 aa).

Fe(3+)-binding residues include His-73 and His-75. The Zn(2+) site is built by His-73 and His-75. 4-imidazolone-5-propanoate contacts are provided by Arg-82, Tyr-145, and His-178. Tyr-145 contributes to the N-formimidoyl-L-glutamate binding site. Position 243 (His-243) interacts with Fe(3+). His-243 contributes to the Zn(2+) binding site. Gln-246 serves as a coordination point for 4-imidazolone-5-propanoate. Asp-318 contacts Fe(3+). Position 318 (Asp-318) interacts with Zn(2+). N-formimidoyl-L-glutamate is bound by residues Asn-320 and Gly-322. A 4-imidazolone-5-propanoate-binding site is contributed by Ser-323.

It belongs to the metallo-dependent hydrolases superfamily. HutI family. It depends on Zn(2+) as a cofactor. Fe(3+) is required as a cofactor.

It localises to the cytoplasm. The enzyme catalyses 4-imidazolone-5-propanoate + H2O = N-formimidoyl-L-glutamate. It participates in amino-acid degradation; L-histidine degradation into L-glutamate; N-formimidoyl-L-glutamate from L-histidine: step 3/3. Functionally, catalyzes the hydrolytic cleavage of the carbon-nitrogen bond in imidazolone-5-propanoate to yield N-formimidoyl-L-glutamate. It is the third step in the universal histidine degradation pathway. In Shewanella piezotolerans (strain WP3 / JCM 13877), this protein is Imidazolonepropionase.